A 583-amino-acid polypeptide reads, in one-letter code: Trehalase (583 aa).

An N-terminal signal peptide occupies residues 1–23; sequence MPGRTWELCLLLLLGLGLGSQEA. N-linked (GlcNAc...) asparagine glycosylation occurs at N78. Substrate-binding positions include R168, 175-176, N212, and 221-223; these read WD and RSQ. Residues N239 and N261 are each glycosylated (N-linked (GlcNAc...) asparagine). Residues 286 to 288 and G319 contribute to the substrate site; that span reads RPE. The active-site Proton donor/acceptor is D321. The N-linked (GlcNAc...) asparagine glycan is linked to N369. The active-site Proton donor/acceptor is the E514. Substrate is bound at residue E529. A lipid anchor (GPI-anchor amidated serine) is attached at S556. A propeptide spans 557-583 (removed in mature form); that stretch reads GAKLAFLEPHCLAATLLPSLLLSLLPW.

This sequence belongs to the glycosyl hydrolase 37 family. In terms of assembly, homodimer; disulfide-linked. In terms of tissue distribution, expressed in kidney, liver and small intestine. Also more weakly expressed in pancreas.

It is found in the cell membrane. It carries out the reaction alpha,alpha-trehalose + H2O = alpha-D-glucose + beta-D-glucose. Functionally, intestinal trehalase is probably involved in the hydrolysis of ingested trehalose. The protein is Trehalase of Homo sapiens (Human).